The following is a 250-amino-acid chain: Pyrroloquinoline-quinone synthase (250 aa).

It belongs to the PqqC family.

It catalyses the reaction 6-(2-amino-2-carboxyethyl)-7,8-dioxo-1,2,3,4,7,8-hexahydroquinoline-2,4-dicarboxylate + 3 O2 = pyrroloquinoline quinone + 2 H2O2 + 2 H2O + H(+). The protein operates within cofactor biosynthesis; pyrroloquinoline quinone biosynthesis. In terms of biological role, ring cyclization and eight-electron oxidation of 3a-(2-amino-2-carboxyethyl)-4,5-dioxo-4,5,6,7,8,9-hexahydroquinoline-7,9-dicarboxylic-acid to PQQ. This is Pyrroloquinoline-quinone synthase from Xanthomonas campestris pv. campestris (strain B100).